The sequence spans 305 residues: UDP-3-O-acyl-N-acetylglucosamine deacetylase (305 aa).

Zn(2+)-binding residues include histidine 79, histidine 238, and aspartate 242. Histidine 265 functions as the Proton donor in the catalytic mechanism.

This sequence belongs to the LpxC family. Zn(2+) is required as a cofactor.

It carries out the reaction a UDP-3-O-[(3R)-3-hydroxyacyl]-N-acetyl-alpha-D-glucosamine + H2O = a UDP-3-O-[(3R)-3-hydroxyacyl]-alpha-D-glucosamine + acetate. The protein operates within glycolipid biosynthesis; lipid IV(A) biosynthesis; lipid IV(A) from (3R)-3-hydroxytetradecanoyl-[acyl-carrier-protein] and UDP-N-acetyl-alpha-D-glucosamine: step 2/6. In terms of biological role, catalyzes the hydrolysis of UDP-3-O-myristoyl-N-acetylglucosamine to form UDP-3-O-myristoylglucosamine and acetate, the committed step in lipid A biosynthesis. The protein is UDP-3-O-acyl-N-acetylglucosamine deacetylase of Salmonella arizonae (strain ATCC BAA-731 / CDC346-86 / RSK2980).